Consider the following 810-residue polypeptide: Protein kinase C-binding protein NELL1 (810 aa).

The signal sequence occupies residues methionine 1–glycine 21. N-linked (GlcNAc...) asparagine glycosylation is found at asparagine 40, asparagine 53, asparagine 83, asparagine 224, asparagine 294, and asparagine 372. One can recognise a Laminin G-like domain in the interval alanine 57 to cysteine 227. Residues lysine 271 to arginine 332 form the VWFC 1 domain. 3 cysteine pairs are disulfide-bonded: cysteine 395–cysteine 407, cysteine 401–cysteine 416, and cysteine 418–cysteine 432. Residues aspartate 434, isoleucine 435, and glutamate 437 each contribute to the Ca(2+) site. An EGF-like 1; calcium-binding domain is found at aspartate 434–threonine 475. Intrachain disulfides connect cysteine 438/cysteine 451, cysteine 445/cysteine 460, cysteine 462/cysteine 474, cysteine 480/cysteine 493, cysteine 487/cysteine 502, cysteine 504/cysteine 515, cysteine 519/cysteine 529, cysteine 523/cysteine 535, cysteine 537/cysteine 546, cysteine 553/cysteine 566, cysteine 560/cysteine 575, cysteine 577/cysteine 594, cysteine 600/cysteine 613, cysteine 607/cysteine 622, and cysteine 624/cysteine 630. Ca(2+) is bound by residues asparagine 453, leucine 454, and leucine 457. The region spanning glutamate 476–lysine 516 is the EGF-like 2; calcium-binding domain. A glycan (N-linked (GlcNAc...) asparagine) is linked at asparagine 511. The EGF-like 3 domain occupies alanine 517–glutamate 547. Residues aspartate 549 to tyrosine 587 enclose the EGF-like 4; calcium-binding domain. Asparagine 562 carries an N-linked (GlcNAc...) asparagine glycan. Residues aspartate 596–serine 631 form the EGF-like 5; calcium-binding domain. Asparagine 609 carries N-linked (GlcNAc...) asparagine glycosylation. VWFC domains are found at residues glycine 632–aspartate 687 and serine 692–valine 750. An N-linked (GlcNAc...) asparagine glycan is attached at asparagine 708.

Homotrimer. Binds to PKC beta-1. Interacts with ATRAID; the interaction promotes osteoblast cell differentiation and mineralization. Interacts with ROBO3.

It is found in the cytoplasm. Its subcellular location is the nucleus envelope. The protein localises to the secreted. In terms of biological role, plays a role in the control of cell growth and differentiation. Promotes osteoblast cell differentiation and terminal mineralization. The chain is Protein kinase C-binding protein NELL1 (Nell1) from Mus musculus (Mouse).